Here is a 372-residue protein sequence, read N- to C-terminus: Trihelix transcription factor GT-4 (372 aa).

Positions 47–111 constitute a Myb-like domain; the sequence is APKKRAETWA…MCTDKWRNIL (65 aa). Phosphoserine is present on serine 167.

Its subcellular location is the nucleus. Its function is as follows. Probable transcription factor that binds specific DNA sequence. This chain is Trihelix transcription factor GT-4 (GT-4), found in Arabidopsis thaliana (Mouse-ear cress).